Here is a 281-residue protein sequence, read N- to C-terminus: Pseudouridine-5'-phosphate glycosidase (281 aa).

The active-site Proton donor is the E9. Residues K69 and V89 each contribute to the substrate site. A Mn(2+)-binding site is contributed by D118. A substrate-binding site is contributed by 120–122; sequence SAD. The active-site Nucleophile is the K139.

This sequence belongs to the pseudouridine-5'-phosphate glycosidase family. In terms of assembly, homotrimer. It depends on Mn(2+) as a cofactor.

It catalyses the reaction D-ribose 5-phosphate + uracil = psi-UMP + H2O. Catalyzes the reversible cleavage of pseudouridine 5'-phosphate (PsiMP) to ribose 5-phosphate and uracil. Functions biologically in the cleavage direction, as part of a pseudouridine degradation pathway. The protein is Pseudouridine-5'-phosphate glycosidase of Thermus thermophilus (strain ATCC BAA-163 / DSM 7039 / HB27).